Consider the following 278-residue polypeptide: MTVLPSVDFFPSGNTSVAIEPRLPQADFPEHHHDFHEIVIVEHGTGIHVFNGQPYTITGGTVCFVRDHDRYLYEHTDNLCLTNVLYRSPDRFQFLAGLNQLLPQELDGQYPSHWRVNHSVLQQVRQLVAQMEQQEGENDLPSTASREILFMQLLLLLRKSSLQENLENSASRLNLLLAWLEDHFADEVNWDAVADQFSLSLRTLHRQLKQQTGLTPQRYLNRLRLMKARHLLRHSEASVTDIAYRCGFSDSNHFSTLFRREFNWSPRDIRQGRDGFLQ.

The region spanning 174–272 (NLLLAWLEDH…NWSPRDIRQG (99 aa)) is the HTH araC/xylS-type domain. 2 consecutive DNA-binding regions (H-T-H motif) follow at residues 191–212 (DAVADQFSLSLRTLHRQLKQQT) and 239–262 (VTDIAYRCGFSDSNHFSTLFRREF).

In terms of assembly, binds DNA as a dimer.

It is found in the cytoplasm. Functionally, activates expression of the rhaBAD and rhaT operons. The polypeptide is HTH-type transcriptional activator RhaS (Shigella dysenteriae serotype 1 (strain Sd197)).